A 586-amino-acid polypeptide reads, in one-letter code: Major facilitator superfamily domain-containing protein 6-like (586 aa).

2 consecutive transmembrane segments (helical) span residues 50–70 (ILMG…AFLA) and 78–98 (MFLT…VLVP). A disordered region spans residues 218–237 (GPVNLSKPQGDTQTPDHSSK). Residues 223-237 (SKPQGDTQTPDHSSK) are compositionally biased toward polar residues. 9 helical membrane-spanning segments follow: residues 240 to 260 (PWTF…AAPL), 284 to 304 (LWVW…ALVG), 318 to 338 (VIYF…STAF), 365 to 385 (LILL…VQDF), 397 to 417 (ELVM…FHPF), 428 to 448 (VGVL…YAFI), 454 to 474 (VLPV…AVGA), 494 to 514 (GHFY…VVLH), and 519 to 538 (VLYE…FLSI).

The protein belongs to the major facilitator superfamily. MFSD6 family.

Its subcellular location is the membrane. This is Major facilitator superfamily domain-containing protein 6-like (Mfsd6l) from Mus musculus (Mouse).